Here is a 178-residue protein sequence, read N- to C-terminus: Large ribosomal subunit protein uL6 (178 aa).

The protein belongs to the universal ribosomal protein uL6 family. In terms of assembly, part of the 50S ribosomal subunit.

This protein binds to the 23S rRNA, and is important in its secondary structure. It is located near the subunit interface in the base of the L7/L12 stalk, and near the tRNA binding site of the peptidyltransferase center. The chain is Large ribosomal subunit protein uL6 from Paenarthrobacter aurescens (strain TC1).